The chain runs to 116 residues: Non-specific lipid-transfer protein 5 (116 aa).

The N-terminal stretch at 1–24 is a signal peptide; sequence MARSMKLACVVLVMCMIVAPMAEG. Cystine bridges form between C28/C75, C38/C52, C53/C98, and C73/C112.

Belongs to the plant LTP family.

Its function is as follows. Plant non-specific lipid-transfer proteins transfer phospholipids as well as galactolipids across membranes. May play a role in wax or cutin deposition in the cell walls of expanding epidermal cells and certain secretory tissues. This Lens culinaris (Lentil) protein is Non-specific lipid-transfer protein 5.